The following is a 189-amino-acid chain: Peptidyl-tRNA hydrolase (189 aa).

His14 lines the tRNA pocket. Catalysis depends on His19, which acts as the Proton acceptor. 3 residues coordinate tRNA: Tyr64, Asn66, and Asn112.

It belongs to the PTH family. Monomer.

It localises to the cytoplasm. It catalyses the reaction an N-acyl-L-alpha-aminoacyl-tRNA + H2O = an N-acyl-L-amino acid + a tRNA + H(+). Its function is as follows. Hydrolyzes ribosome-free peptidyl-tRNAs (with 1 or more amino acids incorporated), which drop off the ribosome during protein synthesis, or as a result of ribosome stalling. Catalyzes the release of premature peptidyl moieties from peptidyl-tRNA molecules trapped in stalled 50S ribosomal subunits, and thus maintains levels of free tRNAs and 50S ribosomes. This Chlorobium phaeobacteroides (strain BS1) protein is Peptidyl-tRNA hydrolase.